We begin with the raw amino-acid sequence, 20 residues long: Cytochrome P450IIB (20 aa).

Belongs to the cytochrome P450 family. Requires heme as cofactor.

The protein localises to the endoplasmic reticulum membrane. It is found in the microsome membrane. It catalyses the reaction an organic molecule + reduced [NADPH--hemoprotein reductase] + O2 = an alcohol + oxidized [NADPH--hemoprotein reductase] + H2O + H(+). Functionally, cytochromes P450 are a group of heme-thiolate monooxygenases. In liver microsomes, this enzyme is involved in an NADPH-dependent electron transport pathway. This isozyme is active upon P.nitroanisole, aniline, D-benzphetamine, delta(9)-tetrahydrocannabinol (THC) and strychnine. The chain is Cytochrome P450IIB from Cavia porcellus (Guinea pig).